The chain runs to 393 residues: 1-deoxy-D-xylulose 5-phosphate reductoisomerase (393 aa).

7 residues coordinate NADPH: Thr-10, Gly-11, Ser-12, Ile-13, Arg-37, Gln-38, and Asn-124. A 1-deoxy-D-xylulose 5-phosphate-binding site is contributed by Lys-125. An NADPH-binding site is contributed by Glu-126. Asp-150 is a Mn(2+) binding site. The 1-deoxy-D-xylulose 5-phosphate site is built by Ser-151, Glu-152, Ser-179, and His-202. Glu-152 lines the Mn(2+) pocket. An NADPH-binding site is contributed by Gly-208. Residues Ser-215, Asn-220, Lys-221, and Glu-224 each contribute to the 1-deoxy-D-xylulose 5-phosphate site. Mn(2+) is bound at residue Glu-224.

The protein belongs to the DXR family. Mg(2+) serves as cofactor. The cofactor is Mn(2+).

It carries out the reaction 2-C-methyl-D-erythritol 4-phosphate + NADP(+) = 1-deoxy-D-xylulose 5-phosphate + NADPH + H(+). It participates in isoprenoid biosynthesis; isopentenyl diphosphate biosynthesis via DXP pathway; isopentenyl diphosphate from 1-deoxy-D-xylulose 5-phosphate: step 1/6. In terms of biological role, catalyzes the NADPH-dependent rearrangement and reduction of 1-deoxy-D-xylulose-5-phosphate (DXP) to 2-C-methyl-D-erythritol 4-phosphate (MEP). The chain is 1-deoxy-D-xylulose 5-phosphate reductoisomerase from Cupriavidus necator (strain ATCC 17699 / DSM 428 / KCTC 22496 / NCIMB 10442 / H16 / Stanier 337) (Ralstonia eutropha).